The primary structure comprises 113 residues: Large ribosomal subunit protein uL24 (113 aa).

This sequence belongs to the universal ribosomal protein uL24 family. As to quaternary structure, part of the 50S ribosomal subunit.

One of two assembly initiator proteins, it binds directly to the 5'-end of the 23S rRNA, where it nucleates assembly of the 50S subunit. In terms of biological role, one of the proteins that surrounds the polypeptide exit tunnel on the outside of the subunit. In Micrococcus luteus (strain ATCC 4698 / DSM 20030 / JCM 1464 / CCM 169 / CCUG 5858 / IAM 1056 / NBRC 3333 / NCIMB 9278 / NCTC 2665 / VKM Ac-2230) (Micrococcus lysodeikticus), this protein is Large ribosomal subunit protein uL24.